The chain runs to 414 residues: MGMFERDTEIYLDRDALREDYQPENLVGRDTELNRYRAALQPVINGEQPNNIFLYGKTGVGKTAGTRYLIDHLEEDAAKYEDIDLTVKMLNCDGLSSSYQIATRLVNEFRDETSQISTTGYPRATVYDMLWTELDSCGGTIYIVLDEVDHIEDDSILYQLPRARANDNLSSAKIGIIGISNDFSFRDDLSPKVKSSLCEEEIQFPAYDAKELIQILQQRADVAFHDGVLEDGVIELCAAYGAKDAGDARQSLDLLMKTGDLARDKDTDTISEDLVREARDVLERGRIQEGISGLTQHGHLVVYAMVTLDQEGKTPARTRDIRPRYTNFAEKAGIDPLVPRRMRDHLGELSMLGIISAIERNEGRRGGTYREYSLEMDPEMILAALEKTVDDVGIHKSVTNLVDAEATLSDFQST.

Residues 60-64 (VGKTA), tyrosine 207, and arginine 219 contribute to the ATP site.

This sequence belongs to the CDC6/cdc18 family.

In terms of biological role, involved in regulation of DNA replication. In Haloarcula marismortui (strain ATCC 43049 / DSM 3752 / JCM 8966 / VKM B-1809) (Halobacterium marismortui), this protein is ORC1-type DNA replication protein 11 (cdc6k).